The following is a 79-amino-acid chain: Small ribosomal subunit protein bS18 (79 aa).

This sequence belongs to the bacterial ribosomal protein bS18 family. As to quaternary structure, part of the 30S ribosomal subunit. Forms a tight heterodimer with protein bS6.

Functionally, binds as a heterodimer with protein bS6 to the central domain of the 16S rRNA, where it helps stabilize the platform of the 30S subunit. The chain is Small ribosomal subunit protein bS18 from Rhodopseudomonas palustris (strain HaA2).